Reading from the N-terminus, the 624-residue chain is Acidic juvenile hormone-suppressible protein 1 (624 aa).

Positions 1–18 (MARLVLCALALLVAGGLA) are cleaved as a signal peptide. 2 N-linked (GlcNAc...) asparagine glycosylation sites follow: N75 and N478.

This sequence belongs to the hemocyanin family.

Its subcellular location is the secreted. The protein resides in the extracellular space. This is Acidic juvenile hormone-suppressible protein 1 (AJSP-1) from Trichoplusia ni (Cabbage looper).